The chain runs to 206 residues: LexA repressor (206 aa).

A DNA-binding region (H-T-H motif) is located at residues 28 to 48 (RAEIARRLGFKSANAAEEHLK). Active-site for autocatalytic cleavage activity residues include Ser123 and Lys160.

This sequence belongs to the peptidase S24 family. In terms of assembly, homodimer.

The catalysed reaction is Hydrolysis of Ala-|-Gly bond in repressor LexA.. Represses a number of genes involved in the response to DNA damage (SOS response), including recA and lexA. In the presence of single-stranded DNA, RecA interacts with LexA causing an autocatalytic cleavage which disrupts the DNA-binding part of LexA, leading to derepression of the SOS regulon and eventually DNA repair. The chain is LexA repressor from Shewanella halifaxensis (strain HAW-EB4).